Here is a 292-residue protein sequence, read N- to C-terminus: Phosphatidylserine decarboxylase proenzyme (292 aa).

Residues Asp89, His146, and Ser252 each act as charge relay system; for autoendoproteolytic cleavage activity in the active site. Ser252 functions as the Schiff-base intermediate with substrate; via pyruvic acid; for decarboxylase activity in the catalytic mechanism. Ser252 is subject to Pyruvic acid (Ser); by autocatalysis.

This sequence belongs to the phosphatidylserine decarboxylase family. PSD-B subfamily. Prokaryotic type I sub-subfamily. As to quaternary structure, heterodimer of a large membrane-associated beta subunit and a small pyruvoyl-containing alpha subunit. It depends on pyruvate as a cofactor. Is synthesized initially as an inactive proenzyme. Formation of the active enzyme involves a self-maturation process in which the active site pyruvoyl group is generated from an internal serine residue via an autocatalytic post-translational modification. Two non-identical subunits are generated from the proenzyme in this reaction, and the pyruvate is formed at the N-terminus of the alpha chain, which is derived from the carboxyl end of the proenzyme. The autoendoproteolytic cleavage occurs by a canonical serine protease mechanism, in which the side chain hydroxyl group of the serine supplies its oxygen atom to form the C-terminus of the beta chain, while the remainder of the serine residue undergoes an oxidative deamination to produce ammonia and the pyruvoyl prosthetic group on the alpha chain. During this reaction, the Ser that is part of the protease active site of the proenzyme becomes the pyruvoyl prosthetic group, which constitutes an essential element of the active site of the mature decarboxylase.

Its subcellular location is the cell membrane. It catalyses the reaction a 1,2-diacyl-sn-glycero-3-phospho-L-serine + H(+) = a 1,2-diacyl-sn-glycero-3-phosphoethanolamine + CO2. Its pathway is phospholipid metabolism; phosphatidylethanolamine biosynthesis; phosphatidylethanolamine from CDP-diacylglycerol: step 2/2. Functionally, catalyzes the formation of phosphatidylethanolamine (PtdEtn) from phosphatidylserine (PtdSer). In Shewanella sp. (strain ANA-3), this protein is Phosphatidylserine decarboxylase proenzyme.